The following is a 320-amino-acid chain: Olfactory receptor 51E2 (320 aa).

Residues 1–24 are Extracellular-facing; that stretch reads MSSCNFTHATFVLIGIPGLEKAHF. The N-linked (GlcNAc...) asparagine glycan is linked to N5. A helical membrane pass occupies residues 25–45; the sequence is WVGFPLLSMYVVAMFGNCIVV. Residues 46–53 lie on the Cytoplasmic side of the membrane; that stretch reads FIVRTERS. A helical membrane pass occupies residues 54–74; it reads LHAPMYLFLCMLAAIDLALST. Topologically, residues 75–98 are extracellular; that stretch reads STMPKILALFWFDSREISFEACLT. A disulfide bond links C96 and C178. A helical membrane pass occupies residues 99–119; the sequence is QMFFIHALSAIESTILLAMAF. Residues 120–138 lie on the Cytoplasmic side of the membrane; it reads DRYVAICHPLRHAAVLNNT. The chain crosses the membrane as a helical span at residues 139 to 159; the sequence is VTAQIGIVAVVRGSLFFFPLP. Topologically, residues 160-195 are extracellular; sequence LLIKRLAFCHSNVLSHSYCVHQDVMKLAYADTLPNV. A helical membrane pass occupies residues 196-216; that stretch reads VYGLTAILLVMGVDVMFISLS. At 217-236 the chain is on the cytoplasmic side; that stretch reads YFLIIRTVLQLPSKSERAKA. A helical transmembrane segment spans residues 237–257; the sequence is FGTCVSHIGVVLAFYVPLIGL. The Extracellular portion of the chain corresponds to 258–272; the sequence is SVVHRFGNSLHPIVR. A helical transmembrane segment spans residues 273–293; the sequence is VVMGDIYLLLPPVINPIIYGA. The Cytoplasmic segment spans residues 294–320; the sequence is KTKQIRTRVLAMFKISCDKDLQAVGGK.

The protein belongs to the G-protein coupled receptor 1 family. In terms of tissue distribution, highly expressed in the prostate. Also expressed in spleen, liver, olfactory epithelium, retinal pigment epithelium and medulla oblongata. In the retinal pigment epithelium expression is restricted to the pigment cells and choroid (at protein level). Expressed in epidermal melanocytes (at protein level).

It is found in the cell membrane. The protein resides in the early endosome membrane. Olfactory receptor. Activated by the odorant, beta-ionone, a synthetic terpenoid. The activity of this receptor is probably mediated by G-proteins leading to the elevation of intracellular Ca(2+), cAMP and activation of the protein kinases PKA and MAPK3/MAPK1. Stimulation of OR51E2 by beta-ionone affects melanocyte proliferation, differentiation, and melanogenesis. Activation of OR51E2 by beta-ionone increases proliferation and migration of primary retinal pigment epithelial (RPE) cells. Activated also by the short-chain fatty acids (SCFA) acetate and propionate. In response to SCFA, may positively regulate renin secretion and increase blood pressure. May also be activated by steroid hormones and regulate cell proliferation. Activated by L-lactate in glomus cells. This Homo sapiens (Human) protein is Olfactory receptor 51E2.